The sequence spans 241 residues: Centromere protein H (241 aa).

Residue Met-1 is modified to N-acetylmethionine. The segment at 1 to 24 (MEEQPRERSEAGAEACEEKRGLSQ) is disordered. A coiled-coil region spans residues 28–186 (ERIEDRISLL…KEDVDKMENS (159 aa)). Residue Lys-61 forms a Glycyl lysine isopeptide (Lys-Gly) (interchain with G-Cter in SUMO2) linkage. Thr-62 carries the post-translational modification Phosphothreonine.

The protein belongs to the CENP-H/MCM16 family. Self-associates. Component of the CENPA-NAC complex, at least composed of CENPA, CENPC, CENPH, CENPM, CENPN, CENPT and CENPU. The CENPA-NAC complex interacts with the CENPA-CAD complex, composed of CENPI, CENPK, CENPL, CENPO, CENPP, CENPQ, CENPR and CENPS. Interacts directly with CENPK. Interacts with KIF2C and NDC80. Interacts with TRIM36. In terms of tissue distribution, abundantly expressed in thymus, spleen, uterus, ovary, testis and muscle, and weakly expressed in small intestine, lung and stomach. Barely detectable expression in kidney, liver, skin and prostate gland. Not detected in brain, heart or adrenal gland. Also expressed weakly in various hematopoietic cell lines.

It is found in the nucleus. The protein localises to the chromosome. It localises to the centromere. The protein resides in the kinetochore. Functionally, component of the CENPA-NAC (nucleosome-associated) complex, a complex that plays a central role in assembly of kinetochore proteins, mitotic progression and chromosome segregation. The CENPA-NAC complex recruits the CENPA-CAD (nucleosome distal) complex and may be involved in incorporation of newly synthesized CENPA into centromeres. Required for chromosome congression and efficiently align the chromosomes on a metaphase plate. The chain is Centromere protein H from Mus musculus (Mouse).